The following is a 398-amino-acid chain: Acetate kinase 1 (398 aa).

Position 10 (asparagine 10) interacts with Mg(2+). Residue lysine 17 coordinates ATP. Residue arginine 89 participates in substrate binding. The active-site Proton donor/acceptor is aspartate 146. ATP is bound by residues histidine 206–glycine 210, aspartate 281–arginine 283, and glycine 329–asparagine 333. Glutamate 384 contributes to the Mg(2+) binding site.

It belongs to the acetokinase family. In terms of assembly, homodimer. It depends on Mg(2+) as a cofactor. Mn(2+) serves as cofactor.

It localises to the cytoplasm. The enzyme catalyses acetate + ATP = acetyl phosphate + ADP. It participates in metabolic intermediate biosynthesis; acetyl-CoA biosynthesis; acetyl-CoA from acetate: step 1/2. Its function is as follows. Catalyzes the formation of acetyl phosphate from acetate and ATP. Can also catalyze the reverse reaction. The polypeptide is Acetate kinase 1 (Neisseria meningitidis serogroup A / serotype 4A (strain DSM 15465 / Z2491)).